Reading from the N-terminus, the 98-residue chain is Co-chaperonin GroES (98 aa).

It belongs to the GroES chaperonin family. Heptamer of 7 subunits arranged in a ring. Interacts with the chaperonin GroEL.

It is found in the cytoplasm. Functionally, together with the chaperonin GroEL, plays an essential role in assisting protein folding. The GroEL-GroES system forms a nano-cage that allows encapsulation of the non-native substrate proteins and provides a physical environment optimized to promote and accelerate protein folding. GroES binds to the apical surface of the GroEL ring, thereby capping the opening of the GroEL channel. This Clavibacter michiganensis subsp. michiganensis (strain NCPPB 382) protein is Co-chaperonin GroES.